A 715-amino-acid chain; its full sequence is ATP-binding cassette sub-family B member 10, mitochondrial (715 aa).

Residues 1 to 82 (MRAPSARALL…SSGARRCWVL (82 aa)) constitute a mitochondrion transit peptide. At 83 to 133 (AGPRAAHPLFARLQGAAATGVRDLGNDSQRRPAATGRSEVWKLLGLVRPER) the chain is on the mitochondrial matrix side. A helical transmembrane segment spans residues 134-157 (GRLSAAVGFLAVSSVITMSAPFFL). Residues 136–422 (LSAAVGFLAV…LSSFYSELMK (287 aa)) enclose the ABC transmembrane type-1 domain. At 158-178 (GRIIDVIYTNPSEGYGDSLTR) the chain is on the mitochondrial intermembrane side. Residues 179-201 (LCAVLTCVFLCGAAANGIRVYLM) traverse the membrane as a helical segment. The Mitochondrial matrix segment spans residues 202–252 (QSSGQSIVNRLRTSLFSSILRQEVAFFDKTRTGELINRLSSDTALLGRSVT). K230 carries the post-translational modification N6-acetyllysine. A helical transmembrane segment spans residues 253–275 (ENLSDGLRAGAQASVGVGMMFFV). The Mitochondrial intermembrane portion of the chain corresponds to 276–278 (SPS). Residues 279 to 298 (LATFVLSVVPPISVLAVIYG) traverse the membrane as a helical segment. The Mitochondrial matrix portion of the chain corresponds to 299–357 (RYLRKLSKATQDSLAEATQLAEERIGNIRTIRAFGKEMTEVEKYTGRVDQLLQLAQKEA). A helical transmembrane segment spans residues 358-381 (LARAGFFGAAGLSGNLIVLSVLYK). The Mitochondrial intermembrane portion of the chain corresponds to 382 to 395 (GGLLMGSAHMTVGE). Residues 396 to 417 (LSSFLMYAFWVGLSIGGLSSFY) traverse the membrane as a helical segment. The Mitochondrial matrix segment spans residues 418-715 (SELMKGLGAG…AEQFLEPARA (298 aa)). The ABC transporter domain occupies 457 to 696 (LEFRNVHFTY…PNGLYRKLMN (240 aa)). Residues G495, G497, K498, S499, and T500 each contribute to the ATP site. Position 499 (S499) interacts with Mg(2+). An S-glutathionyl cysteine modification is found at C547. D623 serves as a coordination point for Mg(2+).

It belongs to the ABC transporter superfamily. ABCB family. Mitochondrial peptide exporter (TC 3.A.1.212) subfamily. In terms of assembly, homodimer or homooligomer. Interacts with PAAT; this interaction regulates ABCB10. Interacts with SLC25A37; this interaction stabilizes SLC25A37 and enhances the function of SLC25A37 to import mitochondrial iron during erythroid differentiation. Interacts with FECH; this interaction may allow the formation of the oligomeric complex with SLC25A37. Forms a complex with ABCB7 and FECH, where a dimeric FECH bridges ABCB7 and ABCB10 homodimers; this complex may be required for cellular iron homeostasis, mitochondrial function and heme biosynthesis. As to expression, expressed at particularly high levels in fetal liver, and erythroid tissues of embryos and adults. Found also in adult bone marrow, liver and kidney, and at lower levels in heart, brain and spleen.

It localises to the mitochondrion inner membrane. It carries out the reaction biliverdin IXalpha(in) + ATP + H2O = biliverdin IXalpha(out) + ADP + phosphate + H(+). Oxidized glutathione (GSSG) stimulates ATP hydrolysis without affecting ATP binding, whereas reduced glutathione (GSH) inhibits ATP binding and hydrolysis. Functionally, ATP-dependent transporter located in the mitochondrial inner membrane that catalyzes the export of biliverdin from the mitochondrial matrix, and plays a crucial role in hemoglobin synthesis and antioxidative stress. Participates in the early step of the heme biosynthetic process during insertion of iron into protoporphyrin IX (PPIX). Involved in the stabilization of the iron transporter mitoferrin-1/SLC25A37. In addition may be involved in mitochondrial unfolded protein response (UPRmt) signaling pathway, although ABCB10 probably does not participate in peptide export from mitochondria. This chain is ATP-binding cassette sub-family B member 10, mitochondrial, found in Mus musculus (Mouse).